A 116-amino-acid polypeptide reads, in one-letter code: UPF0102 protein ELI_05985 (116 aa).

Belongs to the UPF0102 family.

The chain is UPF0102 protein ELI_05985 from Erythrobacter litoralis (strain HTCC2594).